Consider the following 400-residue polypeptide: DNA polymerase IV (400 aa).

A UmuC domain is found at 8–191 (ILLCDANSFF…LPVRELFGIG (184 aa)). D12 and D109 together coordinate Mg(2+). E110 is an active-site residue.

Belongs to the DNA polymerase type-Y family. As to quaternary structure, monomer. Mg(2+) is required as a cofactor.

It localises to the cytoplasm. It carries out the reaction DNA(n) + a 2'-deoxyribonucleoside 5'-triphosphate = DNA(n+1) + diphosphate. In terms of biological role, poorly processive, error-prone DNA polymerase involved in untargeted mutagenesis. Copies undamaged DNA at stalled replication forks, which arise in vivo from mismatched or misaligned primer ends. These misaligned primers can be extended by PolIV. Exhibits no 3'-5' exonuclease (proofreading) activity. May be involved in translesional synthesis, in conjunction with the beta clamp from PolIII. This is DNA polymerase IV from Moorella thermoacetica (strain ATCC 39073 / JCM 9320).